We begin with the raw amino-acid sequence, 508 residues long: Acetyl-coenzyme A carboxylase carboxyl transferase subunit beta, chloroplastic (508 aa).

Disordered stretches follow at residues 30 to 51 and 173 to 234; these read PIEN…NIQG and NSSN…SSTH. A compositionally biased stretch (basic and acidic residues) spans 35 to 47; sequence SESKDPNRNDTDK. The segment covering 173-219 has biased composition (low complexity); the sequence is NSSNNNSSNENSSNENSSNENSSNENSSNDYISSSISSQSENSSQNE. The span at 220-234 shows a compositional bias: polar residues; sequence DITTSDQTIPESSTH. The CoA carboxyltransferase N-terminal domain maps to 244–508; it reads LWVQCENCYG…LHTFFPLNQN (265 aa). Residues Cys248, Cys251, Cys267, and Cys270 each contribute to the Zn(2+) site. The segment at 248–270 adopts a C4-type zinc-finger fold; the sequence is CENCYGLNYKKFFKSKMHLCEQC.

Belongs to the AccD/PCCB family. Acetyl-CoA carboxylase is a heterohexamer composed of biotin carboxyl carrier protein, biotin carboxylase and 2 subunits each of ACCase subunit alpha and ACCase plastid-coded subunit beta (accD). Requires Zn(2+) as cofactor.

It is found in the plastid. It localises to the chloroplast stroma. It carries out the reaction N(6)-carboxybiotinyl-L-lysyl-[protein] + acetyl-CoA = N(6)-biotinyl-L-lysyl-[protein] + malonyl-CoA. The protein operates within lipid metabolism; malonyl-CoA biosynthesis; malonyl-CoA from acetyl-CoA: step 1/1. Its function is as follows. Component of the acetyl coenzyme A carboxylase (ACC) complex. Biotin carboxylase (BC) catalyzes the carboxylation of biotin on its carrier protein (BCCP) and then the CO(2) group is transferred by the transcarboxylase to acetyl-CoA to form malonyl-CoA. The protein is Acetyl-coenzyme A carboxylase carboxyl transferase subunit beta, chloroplastic of Lactuca sativa (Garden lettuce).